The sequence spans 264 residues: Thymidylate synthase (264 aa).

Residue arginine 21 coordinates dUMP. Histidine 51 contributes to the (6R)-5,10-methylene-5,6,7,8-tetrahydrofolate binding site. 126–127 (RR) is a binding site for dUMP. The active-site Nucleophile is the cysteine 146. Residues 166–169 (RSAD), asparagine 177, and 207–209 (HLY) each bind dUMP. Aspartate 169 serves as a coordination point for (6R)-5,10-methylene-5,6,7,8-tetrahydrofolate. (6R)-5,10-methylene-5,6,7,8-tetrahydrofolate is bound at residue alanine 263.

This sequence belongs to the thymidylate synthase family. Bacterial-type ThyA subfamily. In terms of assembly, homodimer.

It is found in the cytoplasm. It carries out the reaction dUMP + (6R)-5,10-methylene-5,6,7,8-tetrahydrofolate = 7,8-dihydrofolate + dTMP. It functions in the pathway pyrimidine metabolism; dTTP biosynthesis. Its function is as follows. Catalyzes the reductive methylation of 2'-deoxyuridine-5'-monophosphate (dUMP) to 2'-deoxythymidine-5'-monophosphate (dTMP) while utilizing 5,10-methylenetetrahydrofolate (mTHF) as the methyl donor and reductant in the reaction, yielding dihydrofolate (DHF) as a by-product. This enzymatic reaction provides an intracellular de novo source of dTMP, an essential precursor for DNA biosynthesis. The sequence is that of Thymidylate synthase from Polynucleobacter asymbioticus (strain DSM 18221 / CIP 109841 / QLW-P1DMWA-1) (Polynucleobacter necessarius subsp. asymbioticus).